Reading from the N-terminus, the 274-residue chain is Large ribosomal subunit protein uL2 (274 aa).

The interval 224–254 (AMNPVDHPHGGGEGRTGEGQAPVSPWNTLTK) is disordered. Over residues 229-239 (DHPHGGGEGRT) the composition is skewed to basic and acidic residues.

Belongs to the universal ribosomal protein uL2 family. In terms of assembly, part of the 50S ribosomal subunit. Forms a bridge to the 30S subunit in the 70S ribosome.

One of the primary rRNA binding proteins. Required for association of the 30S and 50S subunits to form the 70S ribosome, for tRNA binding and peptide bond formation. It has been suggested to have peptidyltransferase activity; this is somewhat controversial. Makes several contacts with the 16S rRNA in the 70S ribosome. The chain is Large ribosomal subunit protein uL2 from Leptothrix cholodnii (strain ATCC 51168 / LMG 8142 / SP-6) (Leptothrix discophora (strain SP-6)).